The following is a 1183-amino-acid chain: DNA-directed RNA polymerase subunit beta' (1183 aa).

Residues cysteine 60, cysteine 62, cysteine 75, and cysteine 78 each coordinate Zn(2+). Mg(2+)-binding residues include aspartate 449, aspartate 451, and aspartate 453. Positions 794, 867, 874, and 877 each coordinate Zn(2+).

This sequence belongs to the RNA polymerase beta' chain family. In terms of assembly, the RNAP catalytic core consists of 2 alpha, 1 beta, 1 beta' and 1 omega subunit. When a sigma factor is associated with the core the holoenzyme is formed, which can initiate transcription. Mg(2+) serves as cofactor. Zn(2+) is required as a cofactor.

The catalysed reaction is RNA(n) + a ribonucleoside 5'-triphosphate = RNA(n+1) + diphosphate. DNA-dependent RNA polymerase catalyzes the transcription of DNA into RNA using the four ribonucleoside triphosphates as substrates. The polypeptide is DNA-directed RNA polymerase subunit beta' (Caldanaerobacter subterraneus subsp. tengcongensis (strain DSM 15242 / JCM 11007 / NBRC 100824 / MB4) (Thermoanaerobacter tengcongensis)).